Here is a 148-residue protein sequence, read N- to C-terminus: Cuticle protein CP1499 (148 aa).

Calcified shell.

This chain is Cuticle protein CP1499, found in Cancer pagurus (Rock crab).